Consider the following 341-residue polypeptide: Peroxisomal membrane protein PEX14 (341 aa).

Position 2 is an N-acetylserine (S2). The SH3-binding motif lies at 86–94 (PPTLPHRDW). The interval 276–341 (MQEESDKEKE…QNGQVEDSIP (66 aa)) is disordered. Positions 279–295 (ESDKEKENGSDANKDDN) are enriched in basic and acidic residues. The segment covering 308 to 341 (IDSNASIPEWQKNTAANEISVPDWQNGQVEDSIP) has biased composition (polar residues). Phosphoserine is present on S313.

It belongs to the peroxin-14 family. In terms of assembly, interacts with PEX13 (via SH3 domain); forming the PEX13-PEX14 docking complex. Interacts with PEX5 (via WxxxF/Y motifs). Interacts with PEX7. Interacts with PEX9.

Its subcellular location is the peroxisome membrane. In terms of biological role, component of the PEX13-PEX14 docking complex, a translocon channel that specifically mediates the import of peroxisomal cargo proteins bound to PEX5 or PEX21 receptors. The PEX13-PEX14 docking complex forms a large import pore which can be opened to a diameter of about 9 nm. Mechanistically, PEX5 (or PEX21) receptor along with cargo proteins associates with the PEX14 subunit of the PEX13-PEX14 docking complex in the cytosol, leading to the insertion of the receptor into the organelle membrane with the concomitant translocation of the cargo into the peroxisome matrix. The sequence is that of Peroxisomal membrane protein PEX14 from Saccharomyces cerevisiae (strain ATCC 204508 / S288c) (Baker's yeast).